The primary structure comprises 384 residues: Spermidine/putrescine import ATP-binding protein PotA (384 aa).

Residues isoleucine 6–isoleucine 238 form the ABC transporter domain. Glycine 40 to serine 47 provides a ligand contact to ATP.

Belongs to the ABC transporter superfamily. Spermidine/putrescine importer (TC 3.A.1.11.1) family. The complex is composed of two ATP-binding proteins (PotA), two transmembrane proteins (PotB and PotC) and a solute-binding protein (PotD).

It is found in the cell membrane. It carries out the reaction ATP + H2O + polyamine-[polyamine-binding protein]Side 1 = ADP + phosphate + polyamineSide 2 + [polyamine-binding protein]Side 1.. Part of the ABC transporter complex PotABCD involved in spermidine/putrescine import. Responsible for energy coupling to the transport system. The polypeptide is Spermidine/putrescine import ATP-binding protein PotA (Streptococcus pyogenes serotype M28 (strain MGAS6180)).